A 128-amino-acid chain; its full sequence is Disintegrin EO4A (128 aa).

Positions 1-20 (MIPVLLVTICLAVFPFQGSS) are cleaved as a signal peptide. Positions 21–47 (IILESGNINDYEIVYPKKVNVLPTGAM) are excised as a propeptide. A Disintegrin domain is found at 26–112 (GNINDYEIVY…DCPRNPYKGK (87 aa)). Cystine bridges form between C53–C76, C67–C73, C72–C97, and C85–C104. Residues 89–91 (RGD) carry the Cell attachment site motif. Positions 115 to 128 (PMKWPAAAKGSVLM) are excised as a propeptide.

This sequence belongs to the disintegrin family. Dimeric disintegrin subfamily. Heterodimer with EO5B; disulfide-linked. As to expression, expressed by the venom gland.

It localises to the secreted. Poor inhibitor of platelet aggregation. The disintegrin inhibits the adhesion of cells expressing the RGD-dependent integrin alpha-5/beta-1 (ITGA5/ITGB1) to immobilized fibronectin. Inhibition on alpha-2b/beta-3 (ITGA2B/ITGB3) is low. In Echis ocellatus (Ocellated saw-scaled viper), this protein is Disintegrin EO4A.